The following is a 258-amino-acid chain: Elongation factor Ts (258 aa).

The interval 81 to 84 (TDFV) is involved in Mg(2+) ion dislocation from EF-Tu. The interval 216–258 (GLKPAEAPKVEETPPAPPEEPAPEPAPAAESKPAKKGSAKKKK) is disordered. Residues 229-241 (PPAPPEEPAPEPA) are compositionally biased toward pro residues. Over residues 249-258 (AKKGSAKKKK) the composition is skewed to basic residues.

It belongs to the EF-Ts family.

It localises to the cytoplasm. Associates with the EF-Tu.GDP complex and induces the exchange of GDP to GTP. It remains bound to the aminoacyl-tRNA.EF-Tu.GTP complex up to the GTP hydrolysis stage on the ribosome. In Synechococcus sp. (strain JA-2-3B'a(2-13)) (Cyanobacteria bacterium Yellowstone B-Prime), this protein is Elongation factor Ts.